A 205-amino-acid chain; its full sequence is Small ribosomal subunit protein uS4 (205 aa).

Residues 1-46 (MSKRHSAKYKIDRRMGENLWGRPKSPVNSRSYGPGQHGQRRKSKVS) form a disordered region. In terms of domain architecture, S4 RNA-binding spans 94 to 154 (SRLDAIVYRA…EKSRNMALVL (61 aa)).

This sequence belongs to the universal ribosomal protein uS4 family. As to quaternary structure, part of the 30S ribosomal subunit. Contacts protein S5. The interaction surface between S4 and S5 is involved in control of translational fidelity.

Functionally, one of the primary rRNA binding proteins, it binds directly to 16S rRNA where it nucleates assembly of the body of the 30S subunit. Its function is as follows. With S5 and S12 plays an important role in translational accuracy. This Caulobacter vibrioides (strain ATCC 19089 / CIP 103742 / CB 15) (Caulobacter crescentus) protein is Small ribosomal subunit protein uS4.